The primary structure comprises 534 residues: Protein FAM83D (534 aa).

Disordered regions lie at residues 320–372 (TPPS…STLG) and 501–534 (GLNRGRKAQQEARQPNTNIDSGIMGTWPKSRGLQ). The span at 329–342 (TKPQAERLTSTPAR) shows a compositional bias: polar residues. Residues 350-362 (RMNKDIEEPDRKS) show a composition bias toward basic and acidic residues. Polar residues predominate over residues 511–520 (EARQPNTNID).

The protein belongs to the FAM83 family.

The protein resides in the cytoplasm. It localises to the cytoskeleton. Its subcellular location is the spindle. It is found in the spindle pole. Functionally, may regulate cell proliferation, growth, migration and epithelial to mesenchymal transition. May also be important for proper chromosome congression and alignment during mitosis. The sequence is that of Protein FAM83D from Danio rerio (Zebrafish).